We begin with the raw amino-acid sequence, 705 residues long: Double-strand break repair protein MRE11 (705 aa).

4 residues coordinate Mn(2+): Asp-15, His-17, Asp-55, and Asn-122. The active-site Proton donor is the His-123. His-220, His-248, and His-250 together coordinate Mn(2+). A compositionally biased stretch (basic and acidic residues) spans 505-514 (RSLRSKEDSR). Positions 505 to 705 (RSLRSKEDSR…TRNYGAVRRR (201 aa)) are disordered. 2 stretches are compositionally biased toward polar residues: residues 515–538 (FTSSSQNLDTGGRSVTAQSNLNSF) and 589–605 (SMKQTTLNFSQSRSSAA). Residues 641-663 (GRKRAAPRGGRGRGRGATAKRGR) are compositionally biased toward basic residues.

It belongs to the MRE11/RAD32 family. As to quaternary structure, component of the MRN complex composed of two heterodimers RAD50/MRE11 associated with a single NBS1. Mn(2+) serves as cofactor.

The protein localises to the nucleus. Its subcellular location is the chromosome. In terms of biological role, core component of the MRN complex, which plays a central role in double-strand break (DSB) repair, DNA recombination, maintenance of telomere integrity and meiosis. The MRN complex is involved in the repair of DNA double-strand breaks (DSBs) via homologous recombination (HR), an error-free mechanism which primarily occurs during S and G2 phases. The complex (1) mediates the end resection of damaged DNA, which generates proper single-stranded DNA, a key initial steps in HR, and is (2) required for the recruitment of other repair factors and efficient activation of ATM and ATR upon DNA damage. Within the MRN complex, MRE11 possesses both single-strand endonuclease activity and double-strand-specific 3'-5' exonuclease activity. MRE11 first endonucleolytically cleaves the 5' strand at DNA DSB ends to prevent non-homologous end joining (NHEJ) and licence HR. It then generates a single-stranded DNA gap via 3' to 5' exonucleolytic degradation, which is required for single-strand invasion and recombination. This is Double-strand break repair protein MRE11 from Oryza sativa subsp. indica (Rice).